The chain runs to 412 residues: Thyroxine-binding globulin (412 aa).

The signal sequence occupies residues 1–16; sequence MPLFLYMVLLVLGIHC. N-linked (GlcNAc...) asparagine glycans are attached at residues Asn-20, Asn-35, Asn-98, Asn-164, and Asn-252. Thyroxine is bound by residues Asn-292 and Lys-395.

This sequence belongs to the serpin family. As to expression, expressed by the liver and secreted in plasma.

Its subcellular location is the secreted. Major thyroid hormone transport protein in serum. This chain is Thyroxine-binding globulin (SERPINA7), found in Sus scrofa (Pig).